Here is a 109-residue protein sequence, read N- to C-terminus: Fluoride-specific ion channel FluC 1 (109 aa).

A run of 4 helical transmembrane segments spans residues 1–21 (MVIV…YFFS), 29–49 (LPLG…VFYN), 55–75 (EVYA…STLN), and 87–107 (VFYS…FLGI). Residues glycine 66 and threonine 69 each contribute to the Na(+) site.

Belongs to the fluoride channel Fluc/FEX (TC 1.A.43) family.

The protein resides in the cell membrane. The catalysed reaction is fluoride(in) = fluoride(out). Na(+) is not transported, but it plays an essential structural role and its presence is essential for fluoride channel function. In terms of biological role, fluoride-specific ion channel. Important for reducing fluoride concentration in the cell, thus reducing its toxicity. The protein is Fluoride-specific ion channel FluC 1 of Streptococcus pneumoniae (strain ATCC BAA-255 / R6).